A 180-amino-acid polypeptide reads, in one-letter code: uncharacterized protein (180 aa).

It to H.influenzae HI_0656.1.

This is an uncharacterized protein from Escherichia coli (strain K12).